The sequence spans 323 residues: SPbeta prophage-derived uncharacterized protein YorG (323 aa).

A coiled-coil region spans residues 222–272 (TAENLEKAIIEAVERQEQAEGIVAVTYEEQKQNNASEELDFNSLMDQIKEI).

The sequence is that of SPbeta prophage-derived uncharacterized protein YorG (yorG) from Bacillus subtilis (strain 168).